A 270-amino-acid chain; its full sequence is ATP synthase subunit a (270 aa).

5 consecutive transmembrane segments (helical) span residues 37-57 (NVHI…LWVF), 98-118 (VAPL…MDLI), 143-163 (DVNI…YYSI), 217-237 (VVFI…GALP), and 239-259 (AIFH…LTIV).

The protein belongs to the ATPase A chain family. As to quaternary structure, F-type ATPases have 2 components, CF(1) - the catalytic core - and CF(0) - the membrane proton channel. CF(1) has five subunits: alpha(3), beta(3), gamma(1), delta(1), epsilon(1). CF(0) has three main subunits: a(1), b(2) and c(9-12). The alpha and beta chains form an alternating ring which encloses part of the gamma chain. CF(1) is attached to CF(0) by a central stalk formed by the gamma and epsilon chains, while a peripheral stalk is formed by the delta and b chains.

The protein localises to the cell inner membrane. In terms of biological role, key component of the proton channel; it plays a direct role in the translocation of protons across the membrane. The chain is ATP synthase subunit a from Aliivibrio salmonicida (strain LFI1238) (Vibrio salmonicida (strain LFI1238)).